Here is a 200-residue protein sequence, read N- to C-terminus: Histone chaperone asf1b (200 aa).

It belongs to the ASF1 family. In terms of assembly, interacts with histone H3 and histone H4.

It is found in the nucleus. Functionally, histone chaperone that facilitates histone deposition and histone exchange and removal during nucleosome assembly and disassembly. This is Histone chaperone asf1b (asf1b) from Xenopus tropicalis (Western clawed frog).